A 56-amino-acid polypeptide reads, in one-letter code: Repressor-like protein SSo7c4 (56 aa).

The SpoVT-AbrB domain occupies 4–51 (EEIVKVSRNYQVTIPAKVRQKFQIKEGDLVKVTFDESGGVVKIQLLDS).

In Saccharolobus solfataricus (strain ATCC 35092 / DSM 1617 / JCM 11322 / P2) (Sulfolobus solfataricus), this protein is Repressor-like protein SSo7c4.